Consider the following 233-residue polypeptide: Ribonuclease 3 (233 aa).

The 130-residue stretch at 6–135 folds into the RNase III domain; sequence QDYLAKEFNI…FIGALYLDQG (130 aa). Glu48 serves as a coordination point for Mg(2+). Residue Asp52 is part of the active site. Residues Asp121 and Glu124 each contribute to the Mg(2+) site. Glu124 is an active-site residue. Residues 161-230 enclose the DRBM domain; the sequence is DAKTSLQEFL…AQQALDNMRN (70 aa). Residues 205–233 are disordered; that stretch reads IGEGKGSSKKHAEMQAAQQALDNMRNKNK.

It belongs to the ribonuclease III family. Homodimer. The cofactor is Mg(2+).

The protein resides in the cytoplasm. The enzyme catalyses Endonucleolytic cleavage to 5'-phosphomonoester.. Functionally, digests double-stranded RNA. Involved in the processing of primary rRNA transcript to yield the immediate precursors to the large and small rRNAs (23S and 16S). Processes some mRNAs, and tRNAs when they are encoded in the rRNA operon. Processes pre-crRNA and tracrRNA of type II CRISPR loci if present in the organism. The chain is Ribonuclease 3 from Limosilactobacillus reuteri (strain DSM 20016) (Lactobacillus reuteri).